Reading from the N-terminus, the 691-residue chain is Hormonally up-regulated neu tumor-associated kinase homolog A (691 aa).

Residues 55–313 (YLIGRKLGEG…IQQALANRWL (259 aa)) enclose the Protein kinase domain. ATP is bound by residues 61–69 (LGEGSFAKV) and K84. D179 functions as the Proton acceptor in the catalytic mechanism. Over residues 406 to 425 (MNKNSYEERRSKDLEKRGEP) the composition is skewed to basic and acidic residues. Disordered stretches follow at residues 406-475 (MNKN…GGLS), 499-518 (QSPD…HSQE), 580-640 (FQFD…SRGR), and 655-679 (QVVS…SPGY). Over residues 440-453 (SHRQNACLTPQGHS) the composition is skewed to polar residues. Residues 457–470 (PVKERRSSKSERES) show a composition bias toward basic and acidic residues. The span at 582–597 (FDNTSPSKSHFNQASF) shows a compositional bias: polar residues. Over residues 604-620 (SPSSPESMSPTSPHSPS) the composition is skewed to low complexity. The span at 621–631 (CNNNISGNLGS) shows a compositional bias: polar residues.

Belongs to the protein kinase superfamily. CAMK Ser/Thr protein kinase family. SNF1 subfamily.

The enzyme catalyses L-seryl-[protein] + ATP = O-phospho-L-seryl-[protein] + ADP + H(+). It carries out the reaction L-threonyl-[protein] + ATP = O-phospho-L-threonyl-[protein] + ADP + H(+). The protein is Hormonally up-regulated neu tumor-associated kinase homolog A (hunk-a) of Xenopus laevis (African clawed frog).